A 91-amino-acid polypeptide reads, in one-letter code: DIDCKTVDSALSPCIPYLLGGGTPTTDCCKGVSAIKDMSTTTDNKRNACKCVKTAAARYPSLKDEVAQALPDKCQVKLDIPISRNTNCDAI.

Intrachain disulfides connect C4–C51, C14–C28, C29–C74, and C49–C88.

This sequence belongs to the plant LTP family. As to expression, detected in seeds (at protein level).

Functionally, plant non-specific lipid-transfer proteins transfer phospholipids as well as galactolipids across membranes. May play a role in wax or cutin deposition in the cell walls of expanding epidermal cells and certain secretory tissues. The sequence is that of Non-specific lipid-transfer protein 1 from Carum carvi (Caraway).